The sequence spans 443 residues: Probable nitrate/nitrite antiporter NarK2 (443 aa).

The next 12 membrane-spanning stretches (helical) occupy residues 32–52 (ITTF…ALVV), 66–86 (LFWL…IWTF), 95–115 (HLVT…GFAV), 123–143 (WVLL…SGYM), 172–192 (IVQF…LLGG), 210–230 (NATF…WVYL), 256–276 (SLYI…PLLI), 292–312 (YAFL…PISD), 314–334 (LGGA…ALLV), 346–366 (FPMF…GNAS), 383–403 (VIGW…TLAA), and 409–429 (TGGF…NFFL).

Belongs to the major facilitator superfamily. Nitrate/nitrite porter (TC 2.A.1.8) family.

It localises to the cell membrane. The enzyme catalyses nitrate(in) + nitrite(out) = nitrate(out) + nitrite(in). Probable nitrate/nitrite antiporter that may be involved in nitrate import and nitrite export during anaerobic growth. In Thermus thermophilus, this protein is Probable nitrate/nitrite antiporter NarK2.